Reading from the N-terminus, the 617-residue chain is Proline--tRNA ligase (617 aa).

The protein belongs to the class-II aminoacyl-tRNA synthetase family. ProS type 1 subfamily. Homodimer.

Its subcellular location is the cytoplasm. The enzyme catalyses tRNA(Pro) + L-proline + ATP = L-prolyl-tRNA(Pro) + AMP + diphosphate. Its function is as follows. Catalyzes the attachment of proline to tRNA(Pro) in a two-step reaction: proline is first activated by ATP to form Pro-AMP and then transferred to the acceptor end of tRNA(Pro). As ProRS can inadvertently accommodate and process non-cognate amino acids such as alanine and cysteine, to avoid such errors it has two additional distinct editing activities against alanine. One activity is designated as 'pretransfer' editing and involves the tRNA(Pro)-independent hydrolysis of activated Ala-AMP. The other activity is designated 'posttransfer' editing and involves deacylation of mischarged Ala-tRNA(Pro). The misacylated Cys-tRNA(Pro) is not edited by ProRS. The sequence is that of Proline--tRNA ligase from Streptococcus pneumoniae (strain ATCC BAA-255 / R6).